The sequence spans 423 residues: O-methyltransferase aoiF (423 aa).

Asp-273 contributes to the S-adenosyl-L-methionine binding site. Catalysis depends on His-324, which acts as the Proton acceptor.

Belongs to the class I-like SAM-binding methyltransferase superfamily. Cation-independent O-methyltransferase family.

Its pathway is secondary metabolite biosynthesis. Functionally, O-methyltransferase; part of the gene cluster that mediates the biosynthesis of a methylated derivative of known natural products orthosporin and diaporthin. Within the pathway, aoiF catalyzes the biotransformation of orthosporin to diaporthin but also of diaporthin to the final product, by performing a tandem methylation of the polyketide core. Orthosporin is produced by an oxidoreductase that has still to be identified and that catalyzes the stereospecific reduction of the carbonyl moiety of the hexaketide isocoumarin scaffold produced by the non-reducing polyketide synthase aoiG to generate the S-configured secondary alcohol at C-11. This Aspergillus oryzae (strain ATCC 42149 / RIB 40) (Yellow koji mold) protein is O-methyltransferase aoiF.